The primary structure comprises 548 residues: Solute carrier family 22 member 7 (548 aa).

12 helical membrane passes run 21 to 41 (VALL…PIFL), 146 to 166 (AAST…GYLS), 180 to 200 (VSTL…MFAI), 204 to 224 (LTGS…LEWL), 234 to 254 (VLSS…GYLI), 259 to 279 (WLLL…WWVP), 346 to 366 (ISLC…GLSL), 376 to 397 (YQTQ…YLSV), 404 to 423 (LTQA…RLLV), 432 to 452 (TVLA…AYLF), 466 to 486 (MGLT…AALL), and 493 to 513 (LPKL…LLLP). The segment at 522–548 (ETIQDVERKSAPTSLQEEEMPMKQVQN) is disordered.

This sequence belongs to the major facilitator (TC 2.A.1) superfamily. Organic cation transporter (TC 2.A.1.19) family.

It localises to the basolateral cell membrane. The protein localises to the apical cell membrane. Its subcellular location is the cell membrane. The enzyme catalyses orotate(out) + L-glutamate(in) = orotate(in) + L-glutamate(out). It catalyses the reaction 3',5'-cyclic GMP(in) = 3',5'-cyclic GMP(out). The catalysed reaction is GMP(in) = GMP(out). It carries out the reaction 2'-deoxyguanosine(in) = 2'-deoxyguanosine(out). The enzyme catalyses GDP(in) = GDP(out). It catalyses the reaction guanosine(in) = guanosine(out). The catalysed reaction is GTP(in) = GTP(out). It carries out the reaction 3',5'-cyclic AMP(in) = 3',5'-cyclic AMP(out). The enzyme catalyses creatinine(in) = creatinine(out). It catalyses the reaction prostaglandin E2(out) = prostaglandin E2(in). The catalysed reaction is 2-oxoglutarate(in) = 2-oxoglutarate(out). It carries out the reaction glutarate(in) = glutarate(out). The enzyme catalyses urate(out) = urate(in). It catalyses the reaction estrone 3-sulfate(out) = estrone 3-sulfate(in). Functionally, functions as a Na(+)-independent bidirectional multispecific transporter. Contributes to the renal and hepatic elimination of endogenous organic compounds from the systemic circulation into the urine and bile, respectively. Capable of transporting a wide range of purine and pyrimidine nucleobases, nucleosides and nucleotides, with cGMP, 2'deoxyguanosine and GMP being the preferred substrates. Functions as a pH- and chloride-independent cGMP bidirectional facilitative transporter that can regulate both intracellular and extracellular levels of cGMP and may be involved in cGMP signaling pathways. Mediates orotate/glutamate bidirectional exchange and most likely display a physiological role in hepatic release of glutamate into the blood. Involved in renal secretion and possible reabsorption of creatinine. Able to uptake prostaglandin E2 (PGE2) and may contribute to PGE2 renal excretion. Also transports alpha-ketoglutarate and urate. Apart from the orotate/glutamate exchange, the counterions for the uptake of other SLC22A7/OAT2 substrates remain to be identified. This is Solute carrier family 22 member 7 (SLC22A7) from Pongo abelii (Sumatran orangutan).